The primary structure comprises 576 residues: MTKRIVVDPITRIEGHLRIEVVVDENNVIQDAFSTATLWRGLETILKGRDPRDAGFFTQRICGVCTYSHYKAGISAVENALGIKPPLNAELIRSLMSISLILHDHTVHFYHLHGLDWCDITSALKADPVAASKLAFKYSPNPIATGADELTAVQKRVAEFAAKGNLGPFANAYWGHKTYRFSPEQNLIVLSHYLKALEVQRVAAQMMAIWGAKQPHPQSLTVGGVTSVMDALDPSRLGDWLTKYKYVADFVNRAYYADVVMAAEVFKSEPSVLGGCNVKNFYSYQEIPLNKTEWMYSTGIVMDGDITKVHEINEDLITEEATHAWYKENKALHPYDGQQDPNYTGFKDMETVGPDGTMVKTKVIDEKGKYTWIKAPRYGGKPLEVGPLATIVVGLAAKNPRIEKVATQFLKDTGLPLAALFTTLGRTAARMLECKLSADYGFEAFNSLIANLKVDQSTYTTYKIDKNKEYKGRYMGTVPRGVLSHWVRIKNGVIQNYQAVVPSTWNAGPRDANGTKGPYEASLVGMKLQDLSQPLEIIRVIHSFDPCIACAVHVMDTKGNELSQYRVDPITVGCNL.

Residues Cys62, Cys65, Cys547, and Cys550 each coordinate Ni(2+).

Belongs to the [NiFe]/[NiFeSe] hydrogenase large subunit family. As to quaternary structure, heterodimer of a large and a small subunit. The cofactor is Ni(2+).

It localises to the cell membrane. It catalyses the reaction H2 + a menaquinone = a menaquinol. Its function is as follows. This enzyme recycles the H(2) produced by nitrogenase to increase the production of ATP and to protect nitrogenase against inhibition or damage by O(2) under carbon- or phosphate-limited conditions. The polypeptide is Quinone-reactive Ni/Fe-hydrogenase large chain (hydB) (Wolinella succinogenes (strain ATCC 29543 / DSM 1740 / CCUG 13145 / JCM 31913 / LMG 7466 / NCTC 11488 / FDC 602W) (Vibrio succinogenes)).